The primary structure comprises 226 residues: ATP-dependent Clp protease proteolytic subunit 2 (226 aa).

Serine 118 (nucleophile) is an active-site residue. Histidine 143 is an active-site residue.

The protein belongs to the peptidase S14 family. Fourteen ClpP subunits assemble into 2 heptameric rings which stack back to back to give a disk-like structure with a central cavity, resembling the structure of eukaryotic proteasomes.

Its subcellular location is the cytoplasm. The enzyme catalyses Hydrolysis of proteins to small peptides in the presence of ATP and magnesium. alpha-casein is the usual test substrate. In the absence of ATP, only oligopeptides shorter than five residues are hydrolyzed (such as succinyl-Leu-Tyr-|-NHMec, and Leu-Tyr-Leu-|-Tyr-Trp, in which cleavage of the -Tyr-|-Leu- and -Tyr-|-Trp bonds also occurs).. Functionally, cleaves peptides in various proteins in a process that requires ATP hydrolysis. Has a chymotrypsin-like activity. Plays a major role in the degradation of misfolded proteins. The polypeptide is ATP-dependent Clp protease proteolytic subunit 2 (Synechocystis sp. (strain ATCC 27184 / PCC 6803 / Kazusa)).